Reading from the N-terminus, the 192-residue chain is Phosphoheptose isomerase (192 aa).

Residues 37–192 (LADSFKAGGK…IQLIEKEMVK (156 aa)) form the SIS domain. Position 52–54 (52–54 (NGG)) interacts with substrate. Residues His61 and Glu65 each coordinate Zn(2+). Substrate-binding positions include Glu65, 93 to 94 (ND), 119 to 121 (STS), Ser124, and Gln172. Zn(2+) contacts are provided by Gln172 and His180.

It belongs to the SIS family. GmhA subfamily. In terms of assembly, homotetramer. Zn(2+) is required as a cofactor.

Its subcellular location is the cytoplasm. The enzyme catalyses 2 D-sedoheptulose 7-phosphate = D-glycero-alpha-D-manno-heptose 7-phosphate + D-glycero-beta-D-manno-heptose 7-phosphate. The protein operates within carbohydrate biosynthesis; D-glycero-D-manno-heptose 7-phosphate biosynthesis; D-glycero-alpha-D-manno-heptose 7-phosphate and D-glycero-beta-D-manno-heptose 7-phosphate from sedoheptulose 7-phosphate: step 1/1. Functionally, catalyzes the isomerization of sedoheptulose 7-phosphate in D-glycero-D-manno-heptose 7-phosphate. In Shigella dysenteriae serotype 1 (strain Sd197), this protein is Phosphoheptose isomerase.